Reading from the N-terminus, the 762-residue chain is Probable disease resistance protein At1g61300 (762 aa).

Residue G2 is the site of N-myristoyl glycine attachment. Residues C3 and C4 are each lipidated (S-palmitoyl cysteine). In terms of domain architecture, NB-ARC spans 26–329; it reads NINRNSFGVE…CEGFIGEDQV (304 aa). 68-75 provides a ligand contact to ATP; it reads GMGGVGKT. 5 LRR repeats span residues 401–422, 423–444, 447–470, 471–493, and 494–516; these read AVRR…SKCS, ELTT…FIRY, KLVV…SGLV, SLQF…KKLK, and KLTF…SRLL.

Belongs to the disease resistance NB-LRR family.

The protein resides in the cell membrane. Its function is as follows. Probable disease resistance protein. The sequence is that of Probable disease resistance protein At1g61300 from Arabidopsis thaliana (Mouse-ear cress).